The sequence spans 295 residues: Cbb3-type cytochrome c oxidase subunit CcoP (295 aa).

Over 1 to 31 (MAQKEKDALSGVETTGHEWDGLRELNNPLPK) the chain is Cytoplasmic. Residues 32–52 (WWLYIFYVCIAWSLVYYVLYP) traverse the membrane as a helical segment. The Periplasmic segment spans residues 53–295 (AWPLGKSYTK…VYVHNLGGGK (243 aa)). Cytochrome c domains lie at 108-200 (FAMA…LSLN) and 207-292 (AAAE…HNLG). Heme c-binding residues include C121, C124, H125, M175, C220, C223, H224, and M269.

The protein belongs to the CcoP / FixP family. In terms of assembly, component of the cbb3-type cytochrome c oxidase at least composed of CcoN, CcoO, CcoQ and CcoP. The cofactor is heme c.

It is found in the cell inner membrane. The protein operates within energy metabolism; oxidative phosphorylation. In terms of biological role, C-type cytochrome. Part of the cbb3-type cytochrome c oxidase complex. CcoP subunit is required for transferring electrons from donor cytochrome c via its heme groups to CcoO subunit. From there, electrons are shuttled to the catalytic binuclear center of CcoN subunit where oxygen reduction takes place. The complex also functions as a proton pump. This chain is Cbb3-type cytochrome c oxidase subunit CcoP, found in Azospirillum brasilense.